A 373-amino-acid chain; its full sequence is SH3 domain-binding protein 5-like (373 aa).

Residues 1-53 are disordered; that stretch reads MEGKEGPSCEVRLPTPGAEREGPIHPELGAFGETASNTIKLSESSNDGKKEEI. A compositionally biased stretch (polar residues) spans 34-45; the sequence is TASNTIKLSESS. 2 coiled-coil regions span residues 55 to 98 and 170 to 272; these read EELD…ESAR and WQEM…SEEI. Disordered stretches follow at residues 276-305 and 344-373; these read RTQS…TGPP and TGAV…SVSL. The span at 344–358 shows a compositional bias: basic and acidic residues; it reads TGAVECGGSRERGGD.

The protein belongs to the SH3BP5 family.

Functions as a guanine nucleotide exchange factor (GEF) for rab11a. This Xenopus tropicalis (Western clawed frog) protein is SH3 domain-binding protein 5-like (sh3bp5l).